A 180-amino-acid polypeptide reads, in one-letter code: Large ribosomal subunit protein uL18m (180 aa).

The protein belongs to the universal ribosomal protein uL18 family. In terms of assembly, component of the mitochondrial ribosome large subunit (39S) which comprises a 16S rRNA and about 50 distinct proteins.

It localises to the mitochondrion. In terms of biological role, together with thiosulfate sulfurtransferase (TST), acts as a mitochondrial import factor for the cytosolic 5S rRNA. The precursor form shows RNA chaperone activity; is able to fold the 5S rRNA into an import-competent conformation that is recognized by rhodanese (TST). Both the cytoplasmic and mitochondrial forms are able to bind to the helix IV-loop D in the gamma domain of the 5S rRNA. This Bos taurus (Bovine) protein is Large ribosomal subunit protein uL18m (MRPL18).